The primary structure comprises 929 residues: LPS-assembly protein LptD (929 aa).

Positions 1-24 are cleaved as a signal peptide; that stretch reads MKLRFIRSAGWLFLLFCLACNARA. The interval 26 to 208 is disordered; the sequence is LPPLSSKPEQ…EAGDEKLRLA (183 aa). The span at 44 to 74 shows a compositional bias: basic and acidic residues; it reads GDDKPVVIDTERIRGHHEYESGTRSESELRS. Positions 154–164 are enriched in polar residues; sequence RTQSAPRTLSA. Positions 181–208 are enriched in basic and acidic residues; it reads DQDRPGFAEGERIGGHREEAGDEKLRLA.

The protein belongs to the LptD family. In terms of assembly, component of the lipopolysaccharide transport and assembly complex. Interacts with LptE and LptA.

It is found in the cell outer membrane. Its function is as follows. Together with LptE, is involved in the assembly of lipopolysaccharide (LPS) at the surface of the outer membrane. The protein is LPS-assembly protein LptD of Nitrosospira multiformis (strain ATCC 25196 / NCIMB 11849 / C 71).